We begin with the raw amino-acid sequence, 239 residues long: Orotidine 5'-phosphate decarboxylase (239 aa).

Substrate-binding positions include aspartate 11, lysine 33, aspartate 60–threonine 69, threonine 117, arginine 178, glutamine 187, glycine 207, and arginine 208. Lysine 62 (proton donor) is an active-site residue.

The protein belongs to the OMP decarboxylase family. Type 1 subfamily. Homodimer.

The catalysed reaction is orotidine 5'-phosphate + H(+) = UMP + CO2. The protein operates within pyrimidine metabolism; UMP biosynthesis via de novo pathway; UMP from orotate: step 2/2. Functionally, catalyzes the decarboxylation of orotidine 5'-monophosphate (OMP) to uridine 5'-monophosphate (UMP). In Nitrosospira multiformis (strain ATCC 25196 / NCIMB 11849 / C 71), this protein is Orotidine 5'-phosphate decarboxylase.